The sequence spans 284 residues: uncharacterized protein (284 aa).

2 stretches are compositionally biased toward low complexity: residues 110–123 (NGPR…PNNG) and 130–149 (NGPM…NGPN). The tract at residues 110–176 (NGPRGRQMNG…PNEFDSDDDD (67 aa)) is disordered.

The protein resides in the virion. This is an uncharacterized protein from Acanthamoeba polyphaga mimivirus (APMV).